The sequence spans 77 residues: Small ribosomal subunit protein bS21 (77 aa).

A compositionally biased stretch (basic and acidic residues) spans 38-52 (KPSEKRAREKAEAVR). Residues 38 to 77 (KPSEKRAREKAEAVRRTRKLARKRAQREGLISNGRGSPLK) are disordered. Residues 53 to 62 (RTRKLARKRA) show a composition bias toward basic residues.

This sequence belongs to the bacterial ribosomal protein bS21 family.

The chain is Small ribosomal subunit protein bS21 from Bartonella henselae (strain ATCC 49882 / DSM 28221 / CCUG 30454 / Houston 1) (Rochalimaea henselae).